Consider the following 226-residue polypeptide: Large ribosomal subunit protein uL1 (226 aa).

The protein belongs to the universal ribosomal protein uL1 family. As to quaternary structure, part of the 50S ribosomal subunit.

Functionally, binds directly to 23S rRNA. The L1 stalk is quite mobile in the ribosome, and is involved in E site tRNA release. Its function is as follows. Protein L1 is also a translational repressor protein, it controls the translation of the L11 operon by binding to its mRNA. The polypeptide is Large ribosomal subunit protein uL1 (Mycoplasma pneumoniae (strain ATCC 29342 / M129 / Subtype 1) (Mycoplasmoides pneumoniae)).